The primary structure comprises 535 residues: 2-isopropylmalate synthase (535 aa).

Positions 13-274 (VLIFDTTLRD…YFNPFLGRPP (262 aa)) constitute a Pyruvate carboxyltransferase domain. Residues D22, H213, H215, and N249 each contribute to the Mn(2+) site. A regulatory domain region spans residues 414-535 (QLEFVQVSCG…LEQRALHPQA (122 aa)).

This sequence belongs to the alpha-IPM synthase/homocitrate synthase family. LeuA type 1 subfamily. Homodimer. Requires Mn(2+) as cofactor.

The protein resides in the cytoplasm. It catalyses the reaction 3-methyl-2-oxobutanoate + acetyl-CoA + H2O = (2S)-2-isopropylmalate + CoA + H(+). It functions in the pathway amino-acid biosynthesis; L-leucine biosynthesis; L-leucine from 3-methyl-2-oxobutanoate: step 1/4. Its function is as follows. Catalyzes the condensation of the acetyl group of acetyl-CoA with 3-methyl-2-oxobutanoate (2-ketoisovalerate) to form 3-carboxy-3-hydroxy-4-methylpentanoate (2-isopropylmalate). In Thermosynechococcus vestitus (strain NIES-2133 / IAM M-273 / BP-1), this protein is 2-isopropylmalate synthase.